A 214-amino-acid chain; its full sequence is UPF0111 protein MJ0629 (214 aa).

Belongs to the UPF0111 family.

This is UPF0111 protein MJ0629 from Methanocaldococcus jannaschii (strain ATCC 43067 / DSM 2661 / JAL-1 / JCM 10045 / NBRC 100440) (Methanococcus jannaschii).